Here is a 527-residue protein sequence, read N- to C-terminus: ADP-ribosylation factor-like protein 13B (527 aa).

Residues glycine 26–threonine 33, aspartate 69–glycine 73, and asparagine 128–aspartate 131 contribute to the GTP site. Basic and acidic residues predominate over residues glutamate 200–lysine 248. 2 disordered regions span residues glutamate 200–leucine 252 and glycine 300–valine 503. Positions glutamine 381–serine 444 are enriched in low complexity. Positions alanine 445–serine 457 are enriched in gly residues.

Belongs to the small GTPase superfamily. Arf family. As to quaternary structure, monomer.

Its subcellular location is the cell projection. The protein localises to the cilium membrane. Functionally, cilium-specific protein required to control the microtubule-based, ciliary axoneme structure. May act by maintaining the association between IFT subcomplexes A and B. The sequence is that of ADP-ribosylation factor-like protein 13B (ARL13) from Chlamydomonas reinhardtii (Chlamydomonas smithii).